Reading from the N-terminus, the 88-residue chain is Large ribosomal subunit protein bL31B (88 aa).

This sequence belongs to the bacterial ribosomal protein bL31 family. Type B subfamily. In terms of assembly, part of the 50S ribosomal subunit.

The protein is Large ribosomal subunit protein bL31B of Paraburkholderia phytofirmans (strain DSM 17436 / LMG 22146 / PsJN) (Burkholderia phytofirmans).